The primary structure comprises 503 residues: ATP synthase subunit alpha (503 aa).

170–177 (GDRKTGKT) contributes to the ATP binding site.

This sequence belongs to the ATPase alpha/beta chains family. F-type ATPases have 2 components, CF(1) - the catalytic core - and CF(0) - the membrane proton channel. CF(1) has five subunits: alpha(3), beta(3), gamma(1), delta(1), epsilon(1). CF(0) has four main subunits: a, b, b' and c.

It is found in the cellular thylakoid membrane. The catalysed reaction is ATP + H2O + 4 H(+)(in) = ADP + phosphate + 5 H(+)(out). In terms of biological role, produces ATP from ADP in the presence of a proton gradient across the membrane. The alpha chain is a regulatory subunit. In Gloeothece citriformis (strain PCC 7424) (Cyanothece sp. (strain PCC 7424)), this protein is ATP synthase subunit alpha.